The sequence spans 369 residues: L-lactate oxidase (369 aa).

Residues 13 to 369 (EKKLNVLNLD…KNAKLLNIRY (357 aa)) enclose the FMN hydroxy acid dehydrogenase domain. Y39 contributes to the pyruvate binding site. Residues 92-94 (PAA), S121, and Q143 contribute to the FMN site. Residue Y145 coordinates pyruvate. T171 lines the FMN pocket. R180 is a binding site for pyruvate. FMN-binding residues include K240 and S262. H264 and R267 together coordinate pyruvate. The active-site Proton acceptor is the H264. Residues 295–299 (DSGIR) and R319 contribute to the FMN site.

It belongs to the FMN-dependent alpha-hydroxy acid dehydrogenase family. Homotetramer. It depends on FMN as a cofactor.

It carries out the reaction (S)-lactate + O2 = pyruvate + H2O2. Its function is as follows. Catalyzes the oxidation of (S)-lactate (L-lactate) to pyruvate, with a reduction of O2 to H2O2. May be involved in the utilization of L-lactate as an energy source for growth. This chain is L-lactate oxidase, found in Lentilactobacillus hilgardii (strain ATCC 8290 / DSM 20176 / CCUG 30140 / JCM 1155 / KCTC 3500 / NBRC 15886 / NCIMB 8040 / NRRL B-1843 / 9).